The chain runs to 188 residues: Putative nucleotidase OB0422 (188 aa).

Belongs to the 5'(3')-deoxyribonucleotidase family.

This chain is Putative nucleotidase OB0422, found in Oceanobacillus iheyensis (strain DSM 14371 / CIP 107618 / JCM 11309 / KCTC 3954 / HTE831).